The sequence spans 388 residues: Chorismate synthase (388 aa).

Residues arginine 39 and arginine 45 each contribute to the NADP(+) site. FMN is bound by residues 130-132, 251-252, glycine 296, 311-315, and arginine 337; these read RSS, NA, and KPIPT.

It belongs to the chorismate synthase family. In terms of assembly, homotetramer. It depends on FMNH2 as a cofactor.

The enzyme catalyses 5-O-(1-carboxyvinyl)-3-phosphoshikimate = chorismate + phosphate. The protein operates within metabolic intermediate biosynthesis; chorismate biosynthesis; chorismate from D-erythrose 4-phosphate and phosphoenolpyruvate: step 7/7. Its function is as follows. Catalyzes the anti-1,4-elimination of the C-3 phosphate and the C-6 proR hydrogen from 5-enolpyruvylshikimate-3-phosphate (EPSP) to yield chorismate, which is the branch point compound that serves as the starting substrate for the three terminal pathways of aromatic amino acid biosynthesis. This reaction introduces a second double bond into the aromatic ring system. The protein is Chorismate synthase of Streptococcus uberis (strain ATCC BAA-854 / 0140J).